We begin with the raw amino-acid sequence, 469 residues long: Glutamine synthetase (469 aa).

The GS beta-grasp domain occupies 15–96 (EDVKFIDVRF…INFFIHDPIT (82 aa)). The GS catalytic domain occupies 104–469 (PRNVAKKAEA…PYEYEQYYDV (366 aa)). Residues glutamate 129 and glutamate 131 each coordinate Mg(2+). Residue glutamate 205 coordinates ATP. Residues glutamate 210 and glutamate 218 each contribute to the Mg(2+) site. 221–223 (YKF) contacts ATP. Residues 262 to 263 (NG) and glycine 263 each bind L-glutamate. Histidine 267 contacts Mg(2+). ATP is bound by residues 269–271 (HQS) and serine 271. Residues arginine 320, glutamate 326, and arginine 338 each contribute to the L-glutamate site. The ATP site is built by arginine 338, arginine 343, and lysine 352. Glutamate 357 is a Mg(2+) binding site. Residue arginine 359 participates in L-glutamate binding. Position 397 is an O-AMP-tyrosine (tyrosine 397).

Belongs to the glutamine synthetase family. As to quaternary structure, oligomer of 12 subunits arranged in the form of two hexagons. Mg(2+) serves as cofactor.

It is found in the cytoplasm. The enzyme catalyses L-glutamate + NH4(+) + ATP = L-glutamine + ADP + phosphate + H(+). With respect to regulation, the activity of this enzyme could be controlled by adenylation under conditions of abundant glutamine. Functionally, catalyzes the ATP-dependent biosynthesis of glutamine from glutamate and ammonia. This Streptomyces viridochromogenes protein is Glutamine synthetase.